The following is a 394-amino-acid chain: 1-deoxy-D-xylulose 5-phosphate reductoisomerase (394 aa).

NADPH contacts are provided by threonine 11, glycine 12, serine 13, isoleucine 14, glycine 37, asparagine 39, and asparagine 126. Lysine 127 is a 1-deoxy-D-xylulose 5-phosphate binding site. Glutamate 128 contacts NADPH. Aspartate 152 contributes to the Mn(2+) binding site. Serine 153, glutamate 154, serine 178, and histidine 201 together coordinate 1-deoxy-D-xylulose 5-phosphate. Glutamate 154 is a Mn(2+) binding site. Glycine 207 provides a ligand contact to NADPH. Residues serine 214, asparagine 219, lysine 220, and glutamate 223 each contribute to the 1-deoxy-D-xylulose 5-phosphate site. Residue glutamate 223 participates in Mn(2+) binding.

This sequence belongs to the DXR family. It depends on Mg(2+) as a cofactor. The cofactor is Mn(2+).

The enzyme catalyses 2-C-methyl-D-erythritol 4-phosphate + NADP(+) = 1-deoxy-D-xylulose 5-phosphate + NADPH + H(+). It participates in isoprenoid biosynthesis; isopentenyl diphosphate biosynthesis via DXP pathway; isopentenyl diphosphate from 1-deoxy-D-xylulose 5-phosphate: step 1/6. Catalyzes the NADPH-dependent rearrangement and reduction of 1-deoxy-D-xylulose-5-phosphate (DXP) to 2-C-methyl-D-erythritol 4-phosphate (MEP). The protein is 1-deoxy-D-xylulose 5-phosphate reductoisomerase of Synechocystis sp. (strain ATCC 27184 / PCC 6803 / Kazusa).